The primary structure comprises 305 residues: Glycine--tRNA ligase alpha subunit (305 aa).

The protein belongs to the class-II aminoacyl-tRNA synthetase family. Tetramer of two alpha and two beta subunits.

Its subcellular location is the cytoplasm. It carries out the reaction tRNA(Gly) + glycine + ATP = glycyl-tRNA(Gly) + AMP + diphosphate. In Vibrio parahaemolyticus serotype O3:K6 (strain RIMD 2210633), this protein is Glycine--tRNA ligase alpha subunit.